The following is a 131-amino-acid chain: Transcription antitermination protein NusB (131 aa).

The protein belongs to the NusB family.

Its function is as follows. Involved in transcription antitermination. Required for transcription of ribosomal RNA (rRNA) genes. Binds specifically to the boxA antiterminator sequence of the ribosomal RNA (rrn) operons. The polypeptide is Transcription antitermination protein NusB (Caldicellulosiruptor saccharolyticus (strain ATCC 43494 / DSM 8903 / Tp8T 6331)).